We begin with the raw amino-acid sequence, 257 residues long: Phosphonates import ATP-binding protein PhnC (257 aa).

In terms of domain architecture, ABC transporter spans 2-246 (IEFRNVSKVY…KFAEIYGDVA (245 aa)). 35 to 42 (GLSGAGKS) lines the ATP pocket.

Belongs to the ABC transporter superfamily. Phosphonates importer (TC 3.A.1.9.1) family. In terms of assembly, the complex is composed of two ATP-binding proteins (PhnC), two transmembrane proteins (PhnE) and a solute-binding protein (PhnD).

It localises to the cell membrane. It carries out the reaction phosphonate(out) + ATP + H2O = phosphonate(in) + ADP + phosphate + H(+). Part of the ABC transporter complex PhnCDE involved in phosphonates import. Responsible for energy coupling to the transport system. This chain is Phosphonates import ATP-binding protein PhnC, found in Bacillus cereus (strain ATCC 10987 / NRS 248).